Reading from the N-terminus, the 108-residue chain is Anthranilate 1,2-dioxygenase ferredoxin subunit (108 aa).

A Rieske domain is found at 9–105; the sequence is WHPLGAIDEF…IRIVDGQVEV (97 aa). The [2Fe-2S] cluster site is built by C49, H51, C68, and H71.

The protein belongs to the bacterial ring-hydroxylating dioxygenase ferredoxin component family. Part of a multicomponent enzyme system composed of a reductase (AndAa), a ferredoxin (AndAb) and a two-subunit oxygenase component (AndAc and AndAd). Requires [2Fe-2S] cluster as cofactor.

It participates in aromatic compound metabolism; anthranilate degradation via hydroxylation; catechol from anthranilate: step 1/1. Its function is as follows. Part of the multicomponent anthranilate dioxygenase, that converts anthranilate to catechol. This protein seems to be a 2Fe-2S ferredoxin. In Burkholderia cepacia (Pseudomonas cepacia), this protein is Anthranilate 1,2-dioxygenase ferredoxin subunit.